A 150-amino-acid polypeptide reads, in one-letter code: 3-hydroxyacyl-[acyl-carrier-protein] dehydratase FabZ (150 aa).

His-52 is an active-site residue.

The protein belongs to the thioester dehydratase family. FabZ subfamily.

Its subcellular location is the cytoplasm. It carries out the reaction a (3R)-hydroxyacyl-[ACP] = a (2E)-enoyl-[ACP] + H2O. In terms of biological role, involved in unsaturated fatty acids biosynthesis. Catalyzes the dehydration of short chain beta-hydroxyacyl-ACPs and long chain saturated and unsaturated beta-hydroxyacyl-ACPs. The protein is 3-hydroxyacyl-[acyl-carrier-protein] dehydratase FabZ of Cupriavidus metallidurans (strain ATCC 43123 / DSM 2839 / NBRC 102507 / CH34) (Ralstonia metallidurans).